We begin with the raw amino-acid sequence, 303 residues long: Glycine--tRNA ligase alpha subunit (303 aa).

The protein belongs to the class-II aminoacyl-tRNA synthetase family. Tetramer of two alpha and two beta subunits.

It localises to the cytoplasm. It carries out the reaction tRNA(Gly) + glycine + ATP = glycyl-tRNA(Gly) + AMP + diphosphate. This is Glycine--tRNA ligase alpha subunit from Methylobacterium radiotolerans (strain ATCC 27329 / DSM 1819 / JCM 2831 / NBRC 15690 / NCIMB 10815 / 0-1).